We begin with the raw amino-acid sequence, 1099 residues long: Protein DDB_G0287365 (1099 aa).

The first 24 residues, 1 to 24 (MMSFNLILILIIFLILIQNYVIDG), serve as a signal peptide directing secretion. The 128-residue stretch at 47-174 (KSWKKLKLPI…TKTTWTKLIS (128 aa)) folds into the G8 domain. Asn62, Asn137, Asn664, Asn764, and Asn858 each carry an N-linked (GlcNAc...) asparagine glycan.

The protein belongs to the CEMIP family.

This is Protein DDB_G0287365 from Dictyostelium discoideum (Social amoeba).